The sequence spans 77 residues: Acyl carrier protein (77 aa).

A Carrier domain is found at 2–77; it reads SDIAARVKKI…DATKFISEAQ (76 aa). Ser-37 is subject to O-(pantetheine 4'-phosphoryl)serine.

It belongs to the acyl carrier protein (ACP) family. Post-translationally, 4'-phosphopantetheine is transferred from CoA to a specific serine of apo-ACP by AcpS. This modification is essential for activity because fatty acids are bound in thioester linkage to the sulfhydryl of the prosthetic group.

The protein resides in the cytoplasm. It participates in lipid metabolism; fatty acid biosynthesis. Carrier of the growing fatty acid chain in fatty acid biosynthesis. The chain is Acyl carrier protein from Jannaschia sp. (strain CCS1).